We begin with the raw amino-acid sequence, 280 residues long: Phosphonoacetaldehyde hydrolase (280 aa).

Residue D20 is the Nucleophile of the active site. Mg(2+) is bound by residues D20 and A22. K61 acts as the Schiff-base intermediate with substrate in catalysis. D194 contributes to the Mg(2+) binding site.

Belongs to the HAD-like hydrolase superfamily. PhnX family. As to quaternary structure, homodimer. Requires Mg(2+) as cofactor.

It catalyses the reaction phosphonoacetaldehyde + H2O = acetaldehyde + phosphate + H(+). Its function is as follows. Involved in phosphonate degradation. The protein is Phosphonoacetaldehyde hydrolase of Nitratidesulfovibrio vulgaris (strain DSM 19637 / Miyazaki F) (Desulfovibrio vulgaris).